The chain runs to 297 residues: Lysenin (297 aa).

The segment at 10-33 (EQIEVDVVAVWKEGYVYENRGSTS) is N-terminal cap domain. The beta-hairpin domain stretch occupies residues 34–107 (VDQKITITKG…SKVIEHTITI (74 aa)). The segment at 108–156 (PPTSKFTRWQLNADVGGADIEYMYLIDEVTPIGGTQSIPQVITSRAKII) is N-terminal cap domain. Positions 157–297 (VGRQIILGKT…EDKWILEVVG (141 aa)) are C-terminal receptor-binding domain. An N-(acyl)-sphingosylphosphocholine-binding residues include Lys-185, Ser-227, Tyr-233, and Tyr-282. Cysteines 272 and 283 form a disulfide.

The protein belongs to the lysenin family. Binds to sphingomyelin as a monomer by using its C-terminal domain. Forms a nonamer when sphingomyelin/lysenin ratio is lower than ca 500. Oligomerization, but not binding, is influenced by the fluidity of sphingomyelin. As to expression, expressed by coelomocytes.

Its subcellular location is the secreted. It localises to the target cell membrane. In terms of biological role, pore-forming toxin that defensively acts against parasitic microorganisms by forming pores in sphingomyelin-containing membranes. Has hemolytic activity and is also cytotoxic to spermatozoa of some species of invertebrates and many species of vertebrates and to amphibian larvae, guinea pig polymorphonuclear leukocytes, chicken fibroblasts, normal spleen cells and various tumor cells. Is lethal for various species of reptiles, amphibian, birds and mammals. Induces smooth muscle contraction. It binds sphingomyelin and induces hemolysis in the same manner as lysenin-related protein 2, and is 10-fold more effective than lysenin-related protein 1. This Eisenia fetida (Red wiggler worm) protein is Lysenin.